The following is a 79-amino-acid chain: Small ribosomal subunit protein bS16c (79 aa).

It belongs to the bacterial ribosomal protein bS16 family.

It is found in the plastid. The protein localises to the chloroplast. This chain is Small ribosomal subunit protein bS16c, found in Thalassiosira pseudonana (Marine diatom).